Here is a 794-residue protein sequence, read N- to C-terminus: DNA ligase (794 aa).

Residues 35-39, 84-85, and glutamate 126 each bind NAD(+); these read DAEYD and SL. Lysine 128 functions as the N6-AMP-lysine intermediate in the catalytic mechanism. Positions 149, 186, 302, and 326 each coordinate NAD(+). Cysteine 420, cysteine 423, cysteine 450, and cysteine 456 together coordinate Zn(2+). Residues 711-794 form the BRCT domain; sequence VEGLPLAGQT…KLFDEHGVAR (84 aa).

It belongs to the NAD-dependent DNA ligase family. LigA subfamily. Requires Mg(2+) as cofactor. Mn(2+) serves as cofactor.

It carries out the reaction NAD(+) + (deoxyribonucleotide)n-3'-hydroxyl + 5'-phospho-(deoxyribonucleotide)m = (deoxyribonucleotide)n+m + AMP + beta-nicotinamide D-nucleotide.. In terms of biological role, DNA ligase that catalyzes the formation of phosphodiester linkages between 5'-phosphoryl and 3'-hydroxyl groups in double-stranded DNA using NAD as a coenzyme and as the energy source for the reaction. It is essential for DNA replication and repair of damaged DNA. The protein is DNA ligase of Pseudomonas aeruginosa (strain UCBPP-PA14).